The chain runs to 347 residues: Protein RecA (347 aa).

Residue 67–74 (GPESSGKT) participates in ATP binding.

Belongs to the RecA family.

Its subcellular location is the cytoplasm. Its function is as follows. Can catalyze the hydrolysis of ATP in the presence of single-stranded DNA, the ATP-dependent uptake of single-stranded DNA by duplex DNA, and the ATP-dependent hybridization of homologous single-stranded DNAs. It interacts with LexA causing its activation and leading to its autocatalytic cleavage. This Paenarthrobacter aurescens (strain TC1) protein is Protein RecA.